Here is a 280-residue protein sequence, read N- to C-terminus: tRNA (guanine-N(1)-)-methyltransferase (280 aa).

The segment at 71 to 94 (DDVSSGTASTQDLQSALPHLSKPR) is disordered. Polar residues predominate over residues 74 to 84 (SSGTASTQDLQ). Residues Gly-146 and 170 to 175 (IGDYVL) each bind S-adenosyl-L-methionine.

This sequence belongs to the RNA methyltransferase TrmD family. In terms of assembly, homodimer.

It localises to the cytoplasm. The catalysed reaction is guanosine(37) in tRNA + S-adenosyl-L-methionine = N(1)-methylguanosine(37) in tRNA + S-adenosyl-L-homocysteine + H(+). Its function is as follows. Specifically methylates guanosine-37 in various tRNAs. The chain is tRNA (guanine-N(1)-)-methyltransferase from Corynebacterium aurimucosum (strain ATCC 700975 / DSM 44827 / CIP 107346 / CN-1) (Corynebacterium nigricans).